The sequence spans 88 residues: Kunitz-type kappaPI-theraphotoxin-Hs1c (88 aa).

The signal sequence occupies residues 1–27 (MGIARILSAVLFLSVLFVVTFPALLSA). Residues 28-33 (DHHDGR) constitute a propeptide that is removed on maturation. Residues 37–85 (CRLPSDRGRCKASFECWYFNGRTCAKFIYGGCGGNGNKFPTQEACMKRC) form the BPTI/Kunitz inhibitor domain. Cystine bridges form between C37–C85, C46–C68, and C60–C81.

This sequence belongs to the venom Kunitz-type family. 02 (native) subfamily. Expressed by the venom gland.

Its subcellular location is the secreted. Its function is as follows. Serine protease inhibitor that inhibits trypsin (Ki=0.281 nM), kallikrein (Ki=337 nM), and chymotrypsin. This Cyriopagopus schmidti (Chinese bird spider) protein is Kunitz-type kappaPI-theraphotoxin-Hs1c.